A 468-amino-acid chain; its full sequence is 6-phospho-beta-galactosidase 2 (468 aa).

Positions 19, 116, 159, 160, and 297 each coordinate D-galactose 6-phosphate. The active-site Proton donor is Glu-160. Glu-375 serves as the catalytic Nucleophile. D-galactose 6-phosphate is bound by residues Ser-428, Trp-429, Lys-435, and Tyr-437.

The protein belongs to the glycosyl hydrolase 1 family.

The catalysed reaction is a 6-phospho-beta-D-galactoside + H2O = D-galactose 6-phosphate + an alcohol. Its pathway is carbohydrate metabolism; lactose degradation; D-galactose 6-phosphate and beta-D-glucose from lactose 6-phosphate: step 1/1. This is 6-phospho-beta-galactosidase 2 from Streptococcus pneumoniae (strain ATCC BAA-255 / R6).